Here is a 476-residue protein sequence, read N- to C-terminus: Bifunctional protein HldE (476 aa).

Positions 1 to 318 (MKPILPDYSQ…AEAIHGSQDT (318 aa)) are ribokinase. 195–198 (NMAE) is a binding site for ATP. Aspartate 264 is an active-site residue. Residues 344 to 476 (MTNGCFDILH…IIKAIKGGRG (133 aa)) form a cytidylyltransferase region.

This sequence in the N-terminal section; belongs to the carbohydrate kinase PfkB family. In the C-terminal section; belongs to the cytidylyltransferase family. In terms of assembly, homodimer.

It carries out the reaction D-glycero-beta-D-manno-heptose 7-phosphate + ATP = D-glycero-beta-D-manno-heptose 1,7-bisphosphate + ADP + H(+). The catalysed reaction is D-glycero-beta-D-manno-heptose 1-phosphate + ATP + H(+) = ADP-D-glycero-beta-D-manno-heptose + diphosphate. Its pathway is nucleotide-sugar biosynthesis; ADP-L-glycero-beta-D-manno-heptose biosynthesis; ADP-L-glycero-beta-D-manno-heptose from D-glycero-beta-D-manno-heptose 7-phosphate: step 1/4. It functions in the pathway nucleotide-sugar biosynthesis; ADP-L-glycero-beta-D-manno-heptose biosynthesis; ADP-L-glycero-beta-D-manno-heptose from D-glycero-beta-D-manno-heptose 7-phosphate: step 3/4. Functionally, catalyzes the phosphorylation of D-glycero-D-manno-heptose 7-phosphate at the C-1 position to selectively form D-glycero-beta-D-manno-heptose-1,7-bisphosphate. In terms of biological role, catalyzes the ADP transfer from ATP to D-glycero-beta-D-manno-heptose 1-phosphate, yielding ADP-D-glycero-beta-D-manno-heptose. The chain is Bifunctional protein HldE from Vibrio atlanticus (strain LGP32) (Vibrio splendidus (strain Mel32)).